The sequence spans 374 residues: UPF0754 membrane protein SA1664 (374 aa).

The next 2 membrane-spanning stretches (helical) occupy residues 4 to 24 and 354 to 374; these read LFII…TNVI and SLGF…AIFV.

This sequence belongs to the UPF0754 family.

The protein localises to the cell membrane. This is UPF0754 membrane protein SA1664 from Staphylococcus aureus (strain N315).